A 523-amino-acid chain; its full sequence is Pentatricopeptide repeat-containing protein At1g64580 (523 aa).

PPR repeat units lie at residues 43-77 (HHHH…RPIP), 78-112 (SIVD…GISH), 113-147 (DLYS…GFRP), 148-182 (SIVT…GFVP), 183-217 (NVVI…GIRA), 218-252 (DAVT…KIDP), 253-287 (NVIF…SVVP), 288-322 (NVFT…GCFP), 323-357 (DVVT…GLVG), 358-392 (DAFT…GVSP), 393-427 (DIVT…EMDV), 428-462 (DIIT…GVKP), and 463-497 (DAIA…GFMP).

The protein belongs to the PPR family. P subfamily.

The polypeptide is Pentatricopeptide repeat-containing protein At1g64580 (Arabidopsis thaliana (Mouse-ear cress)).